The primary structure comprises 419 residues: UDP-N-acetylglucosamine 1-carboxyvinyltransferase 1 (419 aa).

22-23 (KN) serves as a coordination point for phosphoenolpyruvate. Arg92 lines the UDP-N-acetyl-alpha-D-glucosamine pocket. Cys116 functions as the Proton donor in the catalytic mechanism. Cys116 carries the 2-(S-cysteinyl)pyruvic acid O-phosphothioketal modification. UDP-N-acetyl-alpha-D-glucosamine-binding positions include 121–125 (RPIDL), Asp306, and Ile328.

This sequence belongs to the EPSP synthase family. MurA subfamily.

The protein localises to the cytoplasm. The catalysed reaction is phosphoenolpyruvate + UDP-N-acetyl-alpha-D-glucosamine = UDP-N-acetyl-3-O-(1-carboxyvinyl)-alpha-D-glucosamine + phosphate. It functions in the pathway cell wall biogenesis; peptidoglycan biosynthesis. Its function is as follows. Cell wall formation. Adds enolpyruvyl to UDP-N-acetylglucosamine. This chain is UDP-N-acetylglucosamine 1-carboxyvinyltransferase 1, found in Streptococcus agalactiae serotype Ia (strain ATCC 27591 / A909 / CDC SS700).